A 406-amino-acid polypeptide reads, in one-letter code: Argininosuccinate synthase (406 aa).

8-16 (AYSGGLDTS) is a binding site for ATP. Tyrosine 86 contacts L-citrulline. Glycine 116 serves as a coordination point for ATP. The L-aspartate site is built by threonine 118, asparagine 122, and aspartate 123. Position 122 (asparagine 122) interacts with L-citrulline. Positions 126, 174, 183, 259, and 271 each coordinate L-citrulline.

Belongs to the argininosuccinate synthase family. Type 1 subfamily. Homotetramer.

It localises to the cytoplasm. It catalyses the reaction L-citrulline + L-aspartate + ATP = 2-(N(omega)-L-arginino)succinate + AMP + diphosphate + H(+). The protein operates within amino-acid biosynthesis; L-arginine biosynthesis; L-arginine from L-ornithine and carbamoyl phosphate: step 2/3. This is Argininosuccinate synthase from Dehalococcoides mccartyi (strain ATCC BAA-2266 / KCTC 15142 / 195) (Dehalococcoides ethenogenes (strain 195)).